Reading from the N-terminus, the 102-residue chain is NADH-quinone oxidoreductase subunit K 1 (102 aa).

3 helical membrane passes run 5 to 25 (LSHY…GIFL), 31 to 51 (IVIL…MVAF), and 65 to 85 (LFIL…LVVF).

The protein belongs to the complex I subunit 4L family. As to quaternary structure, NDH-1 is composed of 14 different subunits. Subunits NuoA, H, J, K, L, M, N constitute the membrane sector of the complex.

The protein localises to the cell inner membrane. It carries out the reaction a quinone + NADH + 5 H(+)(in) = a quinol + NAD(+) + 4 H(+)(out). Its function is as follows. NDH-1 shuttles electrons from NADH, via FMN and iron-sulfur (Fe-S) centers, to quinones in the respiratory chain. The immediate electron acceptor for the enzyme in this species is believed to be ubiquinone. Couples the redox reaction to proton translocation (for every two electrons transferred, four hydrogen ions are translocated across the cytoplasmic membrane), and thus conserves the redox energy in a proton gradient. In Rhizobium etli (strain CIAT 652), this protein is NADH-quinone oxidoreductase subunit K 1.